A 223-amino-acid polypeptide reads, in one-letter code: Ribose-5-phosphate isomerase A (223 aa).

Residues 28–31, 81–84, and 94–97 contribute to the substrate site; these read TGST, DGAD, and KGGG. The Proton acceptor role is filled by glutamate 103. Lysine 121 is a binding site for substrate.

The protein belongs to the ribose 5-phosphate isomerase family. In terms of assembly, homodimer.

The enzyme catalyses aldehydo-D-ribose 5-phosphate = D-ribulose 5-phosphate. Its pathway is carbohydrate degradation; pentose phosphate pathway; D-ribose 5-phosphate from D-ribulose 5-phosphate (non-oxidative stage): step 1/1. Its function is as follows. Catalyzes the reversible conversion of ribose-5-phosphate to ribulose 5-phosphate. This is Ribose-5-phosphate isomerase A from Ruthia magnifica subsp. Calyptogena magnifica.